Reading from the N-terminus, the 343-residue chain is 2-deoxy-scyllo-inosamine dehydrogenase (343 aa).

Positions 37, 59, 91, 94, 97, 105, and 146 each coordinate Zn(2+).

The protein belongs to the zinc-containing alcohol dehydrogenase family. DOIA dehydrogenase subfamily. Zn(2+) serves as cofactor.

It catalyses the reaction 2-deoxy-scyllo-inosamine + NADP(+) = 3-amino-2,3-dideoxy-scyllo-inosose + NADPH + H(+). The catalysed reaction is 2-deoxy-scyllo-inosamine + NAD(+) = 3-amino-2,3-dideoxy-scyllo-inosose + NADH + H(+). Its pathway is metabolic intermediate biosynthesis; 2-deoxystreptamine biosynthesis; 2-deoxystreptamine from D-glucose 6-phosphate: step 3/4. The protein operates within antibiotic biosynthesis; kanamycin biosynthesis. Its function is as follows. Catalyzes the oxidation of 2-deoxy-scyllo-inosamine (DOIA) with NAD(+) or NADP(+), forming 3-amino-2,3-dideoxy-scyllo-inosose (amino-DOI). The polypeptide is 2-deoxy-scyllo-inosamine dehydrogenase (kanE) (Streptomyces kanamyceticus).